The primary structure comprises 741 residues: Mitofusin-1 (741 aa).

The Cytoplasmic portion of the chain corresponds to 1–584; it reads MAETVSPLKH…AAQEELMITL (584 aa). The interval 9-73 is part of a helix bundle domain, formed by helices from N-terminal and C-terminal regions; it reads KHFVLAKKAI…LAVIGEVLSR (65 aa). Residues 72-321 form the Dynamin-type G domain; it reads SRRHMKVAFF…ARLQEFQNFE (250 aa). The G1 motif stretch occupies residues 82 to 89; the sequence is GRTSSGKS. 85 to 90 contributes to the GTP binding site; sequence SSGKSS. Residues 108–109 form a G2 motif region; sequence TT. The tract at residues 178-181 is G3 motif; the sequence is DSPG. 237–240 is a binding site for GTP; sequence NRWD. The tract at residues 237-240 is G4 motif; it reads NRWD. Glu-266 is a region of interest (G5 motif). The GTP site is built by Ser-284 and Lys-286. Residues 338-364 form a part of a helix bundle domain, formed by helices from N-terminal and C-terminal regions region; the sequence is EQHTIRAKQILDTVKNILDSVNVAAAE. Positions 371-408 form a coiled coil; sequence EEREDQIDRLDFIRNQMNLLTLDVKKKIKEVTEEVANK. A helical transmembrane segment spans residues 585–605; sequence ITGLASLTSRTSMGIIVVGGV. Over 606–608 the chain is Mitochondrial intermembrane; it reads IWK. Residues 609 to 629 form a helical membrane-spanning segment; that stretch reads TVGWKLISVTLSMYGALYLYE. The Cytoplasmic portion of the chain corresponds to 630–741; the sequence is RLTWTTRAKE…QFLHPSSGES (112 aa). Residues 677 to 735 adopt a coiled-coil conformation; the sequence is FARLCQQVDVTQKHLEEEIARLSKEIDQLEKIQNNSKLLRNKAVQLESELENFSKQFLH. The part of a helix bundle domain, formed by helices from N-terminal and C-terminal regions stretch occupies residues 703-734; that stretch reads DQLEKIQNNSKLLRNKAVQLESELENFSKQFL.

This sequence belongs to the TRAFAC class dynamin-like GTPase superfamily. Dynamin/Fzo/YdjA family. Mitofusin subfamily. As to quaternary structure, homodimer, also in the absence of bound GTP. Forms higher oligomers in the presence of a transition state GTP analog. Forms homomultimers and heteromultimers with MFN2. Oligomerization is essential for mitochondrion fusion. Component of a high molecular weight multiprotein complex. Interacts with VAT1. Interacts with THG1L; THG1L probably functions as a guanyl-nucleotide exchange factor/GEF, activating MFN1. Post-translationally, ubiquitinated by MARCHF5. When mitochondria are depolarized and dysfunctional, it is ubiquitinated by a SCF (SKP1-CUL1-F-box protein) E3 ubiquitin-protein ligase complex that contains FBXO7 and PRKN. Ubiquitinated by non-degradative ubiquitin by PRKN, promoting mitochondrial fusion; deubiquitination by USP30 inhibits mitochondrial fusion. In terms of tissue distribution, detected in adult heart. Detected in embryos (at protein level). Widely expressed.

Its subcellular location is the mitochondrion outer membrane. It catalyses the reaction GTP + H2O = GDP + phosphate + H(+). Functionally, mitochondrial outer membrane GTPase that mediates mitochondrial clustering and fusion. Membrane clustering requires GTPase activity. It may involve a major rearrangement of the coiled coil domains. Mitochondria are highly dynamic organelles, and their morphology is determined by the equilibrium between mitochondrial fusion and fission events. Overexpression induces the formation of mitochondrial networks (in vitro). Has low GTPase activity. This is Mitofusin-1 (Mfn1) from Mus musculus (Mouse).